The following is a 471-amino-acid chain: UDP-N-acetylmuramate--L-alanine ligase (471 aa).

112-118 (GTHGKTT) provides a ligand contact to ATP.

It belongs to the MurCDEF family.

It localises to the cytoplasm. The catalysed reaction is UDP-N-acetyl-alpha-D-muramate + L-alanine + ATP = UDP-N-acetyl-alpha-D-muramoyl-L-alanine + ADP + phosphate + H(+). The protein operates within cell wall biogenesis; peptidoglycan biosynthesis. In terms of biological role, cell wall formation. The polypeptide is UDP-N-acetylmuramate--L-alanine ligase (Cupriavidus metallidurans (strain ATCC 43123 / DSM 2839 / NBRC 102507 / CH34) (Ralstonia metallidurans)).